The primary structure comprises 339 residues: Probable cytosolic iron-sulfur protein assembly protein CIAO1 (339 aa).

WD repeat units follow at residues 14 to 53 (HPDS…WICK), 59 to 98 (GHQR…FECV), 103 to 142 (GHEN…EYEC), 148 to 187 (SHTQ…WVCC), 192 to 231 (GHES…NEQG), 250 to 289 (FHTR…DPQQ), and 301 to 339 (AHSQ…PAGL). The LYR motif; required for interaction with HSC20 motif lies at 176–178 (LYQ).

Belongs to the WD repeat CIA1 family. Component of the CIA complex. Interacts with CIAO2A and forms a complex with CIAO2B and MMS19; the interactions with CIAO2A and CIAO2B are mutually exclusive. Interacts with CHD1L, ERCC2, IREB2 and POLD1. Component of the MMXD complex, which includes CIAO1, ERCC2, CIAO2B, MMS19 and SLC25A5. Interacts with WT1. Interacts with CIAO3. Interacts (via LYR motif) with HSC20.

It is found in the cytoplasm. Key component of the cytosolic iron-sulfur protein assembly (CIA) complex, a multiprotein complex that mediates the incorporation of iron-sulfur cluster into extramitochondrial Fe/S proteins. As a CIA complex component, interacts specifically with CIAO2A or CIAO2B and MMS19 to assist different branches of iron-sulfur protein assembly, depending of its interactors. The complex CIAO1:CIAO2B:MMS19 binds to and facilitates the assembly of most cytosolic-nuclear Fe/S proteins. CIAO1:CIAO2A specifically matures ACO1 and stabilizes IREB2. Seems to specifically modulate the transactivation activity of WT1. As part of the mitotic spindle-associated MMXD complex it may play a role in chromosome segregation. This Rattus norvegicus (Rat) protein is Probable cytosolic iron-sulfur protein assembly protein CIAO1.